The chain runs to 647 residues: Macrolide export ATP-binding/permease protein MacB 2 (647 aa).

The ABC transporter domain maps to isoleucine 6–lysine 244. Position 42–49 (glycine 42–serine 49) interacts with ATP. The segment at glutamine 223 to valine 247 is disordered. Over residues proline 230–alanine 242 the composition is skewed to low complexity. 4 helical membrane passes run phenylalanine 273–glycine 293, isoleucine 527–valine 547, leucine 581–valine 601, and leucine 610–leucine 630.

This sequence belongs to the ABC transporter superfamily. Macrolide exporter (TC 3.A.1.122) family. In terms of assembly, homodimer. Part of the tripartite efflux system MacAB-TolC, which is composed of an inner membrane transporter, MacB, a periplasmic membrane fusion protein, MacA, and an outer membrane component, TolC. The complex forms a large protein conduit and can translocate molecules across both the inner and outer membranes. Interacts with MacA.

It is found in the cell inner membrane. Part of the tripartite efflux system MacAB-TolC. MacB is a non-canonical ABC transporter that contains transmembrane domains (TMD), which form a pore in the inner membrane, and an ATP-binding domain (NBD), which is responsible for energy generation. Confers resistance against macrolides. The protein is Macrolide export ATP-binding/permease protein MacB 2 of Aeromonas hydrophila subsp. hydrophila (strain ATCC 7966 / DSM 30187 / BCRC 13018 / CCUG 14551 / JCM 1027 / KCTC 2358 / NCIMB 9240 / NCTC 8049).